Reading from the N-terminus, the 171-residue chain is Adenine phosphoribosyltransferase (171 aa).

It belongs to the purine/pyrimidine phosphoribosyltransferase family. Homodimer.

Its subcellular location is the cytoplasm. It catalyses the reaction AMP + diphosphate = 5-phospho-alpha-D-ribose 1-diphosphate + adenine. Its pathway is purine metabolism; AMP biosynthesis via salvage pathway; AMP from adenine: step 1/1. Catalyzes a salvage reaction resulting in the formation of AMP, that is energically less costly than de novo synthesis. The protein is Adenine phosphoribosyltransferase of Synechococcus sp. (strain ATCC 27144 / PCC 6301 / SAUG 1402/1) (Anacystis nidulans).